A 741-amino-acid chain; its full sequence is Transketolase, chloroplastic (741 aa).

The segment covering 1–19 (MAASSSLSTLSHHQTLLSH) has biased composition (low complexity). A disordered region spans residues 1-33 (MAASSSLSTLSHHQTLLSHPKTHLPTTPASSLL). Residues 1 to 66 (MAASSSLSTL…VGSASAVVRA (66 aa)) constitute a chloroplast transit peptide. Positions 24-33 (LPTTPASSLL) are enriched in polar residues. Substrate is bound at residue H103. Thiamine diphosphate contacts are provided by residues H143 and 192-194 (GPL). Position 233 (D233) interacts with Mg(2+). Thiamine diphosphate is bound by residues G234 and N263. 2 residues coordinate Mg(2+): N263 and I265. Substrate-binding residues include H340, R434, and S461. Position 340 (H340) interacts with thiamine diphosphate. E488 and F515 together coordinate thiamine diphosphate. E488 functions as the Proton donor in the catalytic mechanism. Substrate-binding residues include H539, D547, and R598.

Belongs to the transketolase family. As to quaternary structure, homodimer. The cofactor is Mg(2+). Ca(2+) serves as cofactor. It depends on Mn(2+) as a cofactor. Co(2+) is required as a cofactor. Requires thiamine diphosphate as cofactor.

It is found in the plastid. The protein resides in the chloroplast thylakoid membrane. The catalysed reaction is D-sedoheptulose 7-phosphate + D-glyceraldehyde 3-phosphate = aldehydo-D-ribose 5-phosphate + D-xylulose 5-phosphate. It functions in the pathway carbohydrate biosynthesis; Calvin cycle. Functionally, catalyzes the reversible transfer of a two-carbon ketol group from fructose-6-phosphate or sedoheptulose-7-phosphate to glyceraldehyde-3-phosphate to yield xylulose-5-phosphate and erythrose-4-phosphate or ribose-5-phosphate, respectively. The protein is Transketolase, chloroplastic of Spinacia oleracea (Spinach).